A 213-amino-acid polypeptide reads, in one-letter code: Penicillin-binding protein activator LpoB (213 aa).

The N-terminal stretch at 1–19 (MMKMNRYALVAALAIFLSG) is a signal peptide. The N-palmitoyl cysteine moiety is linked to residue Cys-20. Residue Cys-20 is the site of S-diacylglycerol cysteine attachment. The disordered stretch occupies residues 26–71 (PAPVDEVKPAPEQPAEPQQPVPVVPSVPTIPQQPGPIEHEDQTAQP). The segment covering 36–50 (PEQPAEPQQPVPVVP) has biased composition (pro residues).

Belongs to the LpoB family. Interacts with PBP1b.

The protein resides in the cell outer membrane. Functionally, regulator of peptidoglycan synthesis that is essential for the function of penicillin-binding protein 1B (PBP1b). The sequence is that of Penicillin-binding protein activator LpoB from Citrobacter koseri (strain ATCC BAA-895 / CDC 4225-83 / SGSC4696).